Here is a 777-residue protein sequence, read N- to C-terminus: Lon protease (777 aa).

The Lon N-terminal domain occupies 11-204 (IPVLPLRDVV…FLMAIMETEI (194 aa)). 356-363 (GPPGVGKT) contacts ATP. The Lon proteolytic domain occupies 592-773 (LNQIGQVVGL…EEVLKIALEN (182 aa)). Catalysis depends on residues Ser-679 and Lys-722.

Belongs to the peptidase S16 family. As to quaternary structure, homohexamer. Organized in a ring with a central cavity.

The protein resides in the cytoplasm. The enzyme catalyses Hydrolysis of proteins in presence of ATP.. ATP-dependent serine protease that mediates the selective degradation of mutant and abnormal proteins as well as certain short-lived regulatory proteins. Required for cellular homeostasis and for survival from DNA damage and developmental changes induced by stress. Degrades polypeptides processively to yield small peptide fragments that are 5 to 10 amino acids long. Binds to DNA in a double-stranded, site-specific manner. The protein is Lon protease of Buchnera aphidicola subsp. Schizaphis graminum (strain Sg).